Here is a 183-residue protein sequence, read N- to C-terminus: uncharacterized protein (183 aa).

The interval 54–89 (DAASQSDPLPGGDGLTGGDSKATRRTSPRYYPPSEA) is disordered.

This is an uncharacterized protein from Human cytomegalovirus (strain AD169) (HHV-5).